A 764-amino-acid chain; its full sequence is Nucleolar transcription factor 1 (764 aa).

Met-1 is subject to N-acetylmethionine. The disordered stretch occupies residues 1 to 21; the sequence is MNGEADCPTDLEMAAPKGQDR. DNA-binding regions (HMG box) lie at residues 112-180 and 196-264; these read PKKP…ARFR and PEKP…RDYI. Thr-201 carries the post-translational modification Phosphothreonine. Ser-273, Ser-336, and Ser-364 each carry phosphoserine. Residues 298 to 362 constitute a DNA-binding region (HMG box 3); it reads TKPPPNSYSL…DYEVELLRFL (65 aa). Residues 370–379 are compositionally biased toward basic and acidic residues; sequence QQRVLGEEKM. The segment at 370–411 is disordered; the sequence is QQRVLGEEKMLNINKKQTTSPASKKPSQEGGKGGSEKPKRPV. A phosphoserine mark is found at Ser-389, Ser-412, Ser-433, Ser-435, Ser-484, Ser-495, Ser-546, Ser-584, and Ser-638. 3 DNA-binding regions (HMG box) span residues 407-475, 482-549, and 568-634; these read PKRP…GGER, PESP…SEMR, and KKPP…DLWV. A disordered region spans residues 456 to 488; the sequence is YKAREAALKAQSERKPGGEREDRGKLPESPKRA. Over residues 457-488 the composition is skewed to basic and acidic residues; the sequence is KAREAALKAQSERKPGGEREDRGKLPESPKRA. The interval 546–576 is disordered; that stretch reads SEMRAPPAATNSSKKMKFQGEPKKPPMNGYQ. Positions 648-764 are disordered; it reads YISNKRKNMT…SGDSSDSDSN (117 aa). Residues 664–674 are compositionally biased toward polar residues; that stretch reads PKSSRTTLQSK. Over residues 677-745 the composition is skewed to acidic residues; the sequence is SEEDDDEEDD…DDDEDEDNES (69 aa). Positions 746–758 are enriched in low complexity; the sequence is EGSSSSSSSSGDS.

Homodimer. Part of Pol I pre-initiation complex (PIC), in which Pol I core assembles with RRN3 and promoter-bound UTBF and SL1/TIF-IB complex. Interacts with TOP2A in the context of Pol I complex. Interacts with TBP. Interacts with TAF1A. Interacts with PHF6. Interacts with CEBPA (isoform 1 and isoform 4). Interacts with DDX11. Interacts with NOP53. Interacts with RASL11A. Interacts with DHX33. Binds to IRS1 and PIK3CA. Interacts with ALKBH2. In terms of processing, phosphorylated and activated by PIK3CA.

Its subcellular location is the nucleus. The protein resides in the nucleolus. Functionally, recognizes the ribosomal RNA gene promoter and activates transcription mediated by RNA polymerase I through cooperative interactions with the transcription factor SL1/TIF-IB complex. It binds specifically to the upstream control element. In Rattus norvegicus (Rat), this protein is Nucleolar transcription factor 1 (Ubtf).